A 281-amino-acid chain; its full sequence is Nucleotide-binding protein DNO_0399 (281 aa).

An ATP-binding site is contributed by 6–13 (GMSGAGKS). Residue 55–58 (DARN) coordinates GTP.

It belongs to the RapZ-like family.

Functionally, displays ATPase and GTPase activities. This is Nucleotide-binding protein DNO_0399 from Dichelobacter nodosus (strain VCS1703A).